A 108-amino-acid polypeptide reads, in one-letter code: MWTIPTYILAAFAEIGGCFAFWAWLRLDKSPLWLVPGMASLGLFAWALTRIDADFAGRAYAAYGGIYILASLIWMWAVEGTRPDRWDTIGAAICVVGAMVIIFGPRST.

4 helical membrane-spanning segments follow: residues 4–24, 31–51, 59–79, and 85–105; these read IPTY…FWAW, PLWL…LTRI, AYAA…WAVE, and RWDT…IFGP.

The protein belongs to the UPF0060 family.

It is found in the cell inner membrane. This chain is UPF0060 membrane protein amb3269, found in Paramagnetospirillum magneticum (strain ATCC 700264 / AMB-1) (Magnetospirillum magneticum).